The primary structure comprises 205 residues: Thymidylate kinase (205 aa).

10-17 (GTEGVGKS) contributes to the ATP binding site.

The protein belongs to the thymidylate kinase family.

It carries out the reaction dTMP + ATP = dTDP + ADP. Functionally, phosphorylation of dTMP to form dTDP in both de novo and salvage pathways of dTTP synthesis. This is Thymidylate kinase from Teredinibacter turnerae (strain ATCC 39867 / T7901).